The sequence spans 274 residues: Syntaxin-12 (274 aa).

2 disordered regions span residues 1–20 and 128–147; these read MSYG…PQPR and EKES…EDRQ. At Ser2 the chain carries N-acetylserine. At 2 to 250 the chain is on the cytoplasmic side; it reads SYGPLDMYRN…AYYQKKSRKK (249 aa). A coiled-coil region spans residues 33-130; that stretch reads IQRISQATAQ…QRKVSEKEKE (98 aa). 4 positions are modified to phosphoserine: Ser139, Ser142, Ser218, and Ser225. Residues 178 to 240 form the t-SNARE coiled-coil homology domain; the sequence is LELIKERETA…ERATDQLQRA (63 aa). The chain crosses the membrane as a helical; Anchor for type IV membrane protein span at residues 251 to 271; it reads MCILVLVLSVIVTVLVVVIWV. Residues 272–274 are Vesicular-facing; it reads ASK.

Belongs to the syntaxin family. In terms of assembly, associates with the BLOC-1 complex. Interacts with BLOC1S6. Interacts with NAPA and SNAP23. Identified in a complex containing STX6, STX12, VAMP4 and VTI1A. Interacts with GRIPAP1. Forms a complex with GRIP1, GRIA2 and NSG1; controls the intracellular fate of AMPAR and the endosomal sorting of the GRIA2 subunit toward recycling and membrane targeting. Interacts with NSG1. Interacts with TPC1. Interacts (via N-terminus) with VPS13B.

It is found in the endosome membrane. It localises to the golgi apparatus membrane. The protein localises to the endomembrane system. Its subcellular location is the early endosome membrane. The protein resides in the recycling endosome membrane. Functionally, SNARE promoting fusion of transport vesicles with target membranes. Together with SNARE STX6, promotes movement of vesicles from endosomes to the cell membrane, and may therefore function in the endocytic recycling pathway. Through complex formation with GRIP1, GRIA2 and NSG1 controls the intracellular fate of AMPAR and the endosomal sorting of the GRIA2 subunit toward recycling and membrane targeting. In Mus musculus (Mouse), this protein is Syntaxin-12 (Stx12).